The chain runs to 147 residues: Large ribosomal subunit protein uL13 (147 aa).

Belongs to the universal ribosomal protein uL13 family. In terms of assembly, part of the 50S ribosomal subunit.

Its function is as follows. This protein is one of the early assembly proteins of the 50S ribosomal subunit, although it is not seen to bind rRNA by itself. It is important during the early stages of 50S assembly. This chain is Large ribosomal subunit protein uL13, found in Micrococcus luteus (strain ATCC 4698 / DSM 20030 / JCM 1464 / CCM 169 / CCUG 5858 / IAM 1056 / NBRC 3333 / NCIMB 9278 / NCTC 2665 / VKM Ac-2230) (Micrococcus lysodeikticus).